The following is a 468-amino-acid chain: Neuronal acetylcholine receptor subunit alpha-5 (468 aa).

The first 22 residues, 1 to 22 (MATRGSGPRAPRLLLLVQLVAG), serve as a signal peptide directing secretion. Residues 23-254 (RCGLAGAAGG…VIKRLPLFYT (232 aa)) are Extracellular-facing. N-linked (GlcNAc...) asparagine glycans are attached at residues Asn155, Asn183, and Asn229. A disulfide bridge connects residues Cys170 and Cys184. An intrachain disulfide couples Cys234 to Cys235. Transmembrane regions (helical) follow at residues 255 to 275 (LFLI…FYLP), 282 to 302 (ICLC…IEEI), and 317 to 337 (LVFT…AINI). Topologically, residues 338 to 429 (HHRSSSTHNA…WKFIAQVLDR (92 aa)) are cytoplasmic. A helical membrane pass occupies residues 430–451 (MFLWTFLFVSIVGSLGLFVPVI). Over 452-468 (YKWANILIPVHIGNANK) the chain is Extracellular.

Belongs to the ligand-gated ion channel (TC 1.A.9) family. Acetylcholine receptor (TC 1.A.9.1) subfamily. Alpha-5/CHRNA5 sub-subfamily. As to quaternary structure, neuronal AChR that forms heteropentamers composed of two different type of subunits: alpha and non-alpha (beta). CHRNA5/alpha-5 subunit is only able to form functional nAChRs when co-assembled with another alpha subunit, can be combined to CHRNA4/alpha-4 or CHRNA3/alpha-3 and CHRNB4/beta-4 or CHRNB2/beta-2 to give rise to functional receptors. Interacts with LYPD6.

It is found in the synaptic cell membrane. The protein resides in the cell membrane. It carries out the reaction Ca(2+)(in) = Ca(2+)(out). It catalyses the reaction K(+)(in) = K(+)(out). The enzyme catalyses Na(+)(in) = Na(+)(out). Its activity is regulated as follows. Activated by a myriad of ligands such as acetylcholine, cytisine, nicotine, choline and epibatidine. Functionally, component of neuronal acetylcholine receptors (nAChRs) that function as pentameric, ligand-gated cation channels with high calcium permeability among other activities. nAChRs are excitatory neurotrasnmitter receptors formed by a collection of nAChR subunits known to mediate synaptic transmission in the nervous system and the neuromuscular junction. Each nAchR subunit confers differential attributes to channel properties, including activation, deactivation and desensitization kinetics, pH sensitivity, cation permeability, and binding to allosteric modulators. Has an accessory rather than functional role and is only able to form functional nAChRs when co-assembled with another beta subunit. Participates in pentameric assemblies along with CHRNA3, CHRNA4, CHRNB2 and CHRNB4. Increases receptor sensitivity to acetylcholine and nicotine when associated with CHRNA4 and CHRNB2. Plays a role in nicotine addiction. This chain is Neuronal acetylcholine receptor subunit alpha-5 (CHRNA5), found in Pan troglodytes (Chimpanzee).